The primary structure comprises 21 residues: SEKITVFQKNFQVTENSSHFV.

It belongs to the AB hydrolase superfamily. Lipase family.

The enzyme catalyses a chlorophyll + H2O = a chlorophyllide + phytol + H(+). Its pathway is porphyrin-containing compound metabolism; chlorophyll degradation. Functionally, catalyzes the hydrolysis of ester bond in chlorophyll to yield chlorophyllide and phytol. The protein is Chlorophyllase type 2 of Chenopodium album (Fat hen).